A 55-amino-acid polypeptide reads, in one-letter code: Large ribosomal subunit protein bL33 (55 aa).

Belongs to the bacterial ribosomal protein bL33 family.

This chain is Large ribosomal subunit protein bL33, found in Bordetella pertussis (strain Tohama I / ATCC BAA-589 / NCTC 13251).